The sequence spans 795 residues: Protein translocase subunit SecA 2 (795 aa).

Residues Gln-84, Gly-102–Thr-106, and Asp-496 contribute to the ATP site.

The protein belongs to the SecA family. In terms of assembly, monomer and homodimer. Part of the essential Sec protein translocation apparatus which comprises SecA, SecYEG and auxiliary proteins SecDF. Other proteins may also be involved.

It is found in the cell membrane. It localises to the cytoplasm. The catalysed reaction is ATP + H2O + cellular proteinSide 1 = ADP + phosphate + cellular proteinSide 2.. In terms of biological role, part of the Sec protein translocase complex. Interacts with the SecYEG preprotein conducting channel. Has a central role in coupling the hydrolysis of ATP to the transfer of proteins into and across the cell membrane, serving as an ATP-driven molecular motor driving the stepwise translocation of polypeptide chains across the membrane. The chain is Protein translocase subunit SecA 2 from Streptococcus agalactiae serotype V (strain ATCC BAA-611 / 2603 V/R).